We begin with the raw amino-acid sequence, 197 residues long: Probable deoxycytidylate deaminase (197 aa).

A CMP/dCMP-type deaminase domain is found at 49–183 (KKHQRFLRIA…KMLDHARLPY (135 aa)). H117 is a binding site for Zn(2+). E119 (proton donor) is an active-site residue. 2 residues coordinate Zn(2+): C143 and C146.

It belongs to the cytidine and deoxycytidylate deaminase family. The cofactor is Zn(2+).

It carries out the reaction dCMP + H2O + H(+) = dUMP + NH4(+). In terms of biological role, supplies the nucleotide substrate for thymidylate synthetase. In Caenorhabditis elegans, this protein is Probable deoxycytidylate deaminase.